The primary structure comprises 504 residues: Trifunctional (S)-stylopine synthase/(S)-nandinine synthase/(S)-canadine synthase (504 aa).

A helical membrane pass occupies residues 16–36 (SSTTTTTTILLSLLFTIFIIL). Cys448 contacts heme.

It belongs to the cytochrome P450 family. Requires heme as cofactor. Expressed in roots and at lower levels in stems, leaves and plantlets.

It localises to the endoplasmic reticulum membrane. It catalyses the reaction (S)-cheilanthifoline + reduced [NADPH--hemoprotein reductase] + O2 = (S)-stylopine + oxidized [NADPH--hemoprotein reductase] + 2 H2O + H(+). The enzyme catalyses (S)-tetrahydrocolumbamine + reduced [NADPH--hemoprotein reductase] + O2 = (S)-canadine + oxidized [NADPH--hemoprotein reductase] + 2 H2O + H(+). The catalysed reaction is (S)-scoulerine + reduced [NADPH--hemoprotein reductase] + O2 = (S)-nandinine + oxidized [NADPH--hemoprotein reductase] + 2 H2O + H(+). Methylenedioxy bridge-forming cytochrome P450 involved in the biosynthesis of isoquinoline alkaloids. Converts (S)-cheilanthifoline to (S)-stylopine, (S)-scoulerine to (S)-nandinine and (S)-tetrahydrocolumbamine to (S)-canadine. Can be involved in both sanguinarine and berberine biosynthesis. Catalyzes an oxidative reaction that does not incorporate oxygen into the product. This Argemone mexicana (Mexican prickly poppy) protein is Trifunctional (S)-stylopine synthase/(S)-nandinine synthase/(S)-canadine synthase.